Reading from the N-terminus, the 600-residue chain is Pyranose dehydrogenase 3 (600 aa).

An N-terminal signal peptide occupies residues 1–25 (MLPRVARLNTHLVSLALLGFQITYG). Residues Asn99 and Asn114 are each glycosylated (N-linked (GlcNAc...) asparagine). A Tele-8alpha-FAD histidine modification is found at His127. N-linked (GlcNAc...) asparagine glycans are attached at residues Asn173, Asn199, Asn275, Asn342, Asn399, and Asn507. His535 serves as the catalytic Proton acceptor. The N-linked (GlcNAc...) asparagine glycan is linked to Asn546. The active site involves His579.

It belongs to the GMC oxidoreductase family. As to quaternary structure, monomer. Requires FAD as cofactor. Post-translationally, N-glycosylated.

It localises to the secreted. The catalysed reaction is pyranose + acceptor = pyranos-2-ulose + reduced acceptor.. The enzyme catalyses pyranose + acceptor = pyranos-3-ulose + reduced acceptor.. It catalyses the reaction pyranose + acceptor = pyranos-2,3-diulose + reduced acceptor.. It carries out the reaction a pyranoside + acceptor = a pyranosid-3-ulose + reduced acceptor.. The catalysed reaction is a pyranoside + acceptor = a pyranosid-3,4-diulose + reduced acceptor.. In terms of biological role, catalyzes the single-oxidation or sequential double oxidation reaction of carbohydrates primarily at carbon-2 and/or carbon-3 with the concomitant reduction of the flavin. The enzyme exhibits a broad sugar substrate specificity, oxidizing different aldopyranoses to the corresponding C-1, C-2, C-3 or C-1,2, C-2,3 and C-3,4 (di)dehydro sugars with substrate-specific regioselectivity. Accepts only a narrow range of electron acceptors such as substituted benzoquinones and complexed metal ions and reacts extremely slowly with O(2) as acceptor. May play a role in the natural recycling of plant matter by oxidizing all major monosaccharides in lignocellulose and by reducing quinone compounds or reactive radical species generated during lignin depolymerization. This is Pyranose dehydrogenase 3 from Leucoagaricus meleagris (Western flat-topped agaric).